The chain runs to 306 residues: Dermonecrotic toxin LiSicTox-alphaIA2ai (306 aa).

Positions 1-18 (MLPYIALILVCWSVLSQA) are cleaved as a signal peptide. Residues 19–26 (AQTDVEGR) constitute a propeptide that is removed on maturation. The active site involves H38. 2 residues coordinate Mg(2+): E58 and D60. H74 (nucleophile) is an active-site residue. Disulfide bonds link C78–C84 and C80–C223. Mg(2+) is bound at residue D118. N-linked (GlcNAc...) asparagine glycosylation is present at N283.

Belongs to the arthropod phospholipase D family. Class II subfamily. Class IIa sub-subfamily. Mg(2+) is required as a cofactor. Expressed by the venom gland.

It is found in the secreted. The catalysed reaction is an N-(acyl)-sphingosylphosphocholine = an N-(acyl)-sphingosyl-1,3-cyclic phosphate + choline. The enzyme catalyses an N-(acyl)-sphingosylphosphoethanolamine = an N-(acyl)-sphingosyl-1,3-cyclic phosphate + ethanolamine. It carries out the reaction a 1-acyl-sn-glycero-3-phosphocholine = a 1-acyl-sn-glycero-2,3-cyclic phosphate + choline. It catalyses the reaction a 1-acyl-sn-glycero-3-phosphoethanolamine = a 1-acyl-sn-glycero-2,3-cyclic phosphate + ethanolamine. Its function is as follows. Dermonecrotic toxins cleave the phosphodiester linkage between the phosphate and headgroup of certain phospholipids (sphingolipid and lysolipid substrates), forming an alcohol (often choline) and a cyclic phosphate. This toxin acts on sphingomyelin (SM). It may also act on ceramide phosphoethanolamine (CPE), lysophosphatidylcholine (LPC) and lysophosphatidylethanolamine (LPE), but not on lysophosphatidylserine (LPS), and lysophosphatidylglycerol (LPG). It acts by transphosphatidylation, releasing exclusively cyclic phosphate products as second products. It induces complement-dependent hemolysis, dermonecrosis, vascular permeability and platelet aggregation. This is Dermonecrotic toxin LiSicTox-alphaIA2ai from Loxosceles intermedia (Brown spider).